Reading from the N-terminus, the 1188-residue chain is Meiotically up-regulated gene 190 protein (1188 aa).

A compositionally biased stretch (polar residues) spans 1–11 (MSTHSGDSTKQ). 2 disordered regions span residues 1 to 61 (MSTH…DPIT) and 83 to 125 (FTVP…EADN). Over residues 41–61 (EKKEEQQREQTENEKLFDPIT) the composition is skewed to basic and acidic residues. The segment covering 84-112 (TVPNQSIQGSSLPSEKPYLSSNQPTNVYK) has biased composition (polar residues). A helical membrane pass occupies residues 173-193 (LVISWFFTHSIIISAVLPLAI). In terms of domain architecture, SMP-LTD spans 228 to 453 (IPESAEWMNH…SPKSMTIDLS (226 aa)). The tract at residues 298 to 318 (ASESFSEKQASEAEHKDEPEQ) is disordered. Residues 302–318 (FSEKQASEAEHKDEPEQ) show a composition bias toward basic and acidic residues. C2 domains lie at 451-576 (DLSK…ERCD) and 636-781 (KEEE…TKWY). Ca(2+)-binding residues include Asp485, Asp491, Asp544, Asp546, Ser549, and Asp552. Disordered stretches follow at residues 615-639 (TIPR…KEEE) and 1002-1066 (QRAS…GTMN). Phosphoserine is present on Ser1005. Residues 1022–1032 (DDSVDTEDEET) are compositionally biased toward acidic residues.

Ca(2+) is required as a cofactor.

It localises to the cytoplasm. The protein resides in the endoplasmic reticulum membrane. The protein localises to the nucleus membrane. It is found in the cytoskeleton. Its subcellular location is the microtubule organizing center. It localises to the spindle pole body. In terms of biological role, has a role in meiosis. The chain is Meiotically up-regulated gene 190 protein (mug190) from Schizosaccharomyces pombe (strain 972 / ATCC 24843) (Fission yeast).